The sequence spans 444 residues: Putative cytochrome P450 120 (444 aa).

Cysteine 391 contacts heme.

The protein belongs to the cytochrome P450 family. Heme serves as cofactor.

This chain is Putative cytochrome P450 120 (cyp120), found in Synechocystis sp. (strain ATCC 27184 / PCC 6803 / Kazusa).